Here is a 455-residue protein sequence, read N- to C-terminus: Exodeoxyribonuclease 7 large subunit (455 aa).

This sequence belongs to the XseA family. As to quaternary structure, heterooligomer composed of large and small subunits.

It localises to the cytoplasm. It carries out the reaction Exonucleolytic cleavage in either 5'- to 3'- or 3'- to 5'-direction to yield nucleoside 5'-phosphates.. In terms of biological role, bidirectionally degrades single-stranded DNA into large acid-insoluble oligonucleotides, which are then degraded further into small acid-soluble oligonucleotides. This chain is Exodeoxyribonuclease 7 large subunit, found in Oceanobacillus iheyensis (strain DSM 14371 / CIP 107618 / JCM 11309 / KCTC 3954 / HTE831).